The primary structure comprises 532 residues: uncharacterized protein (532 aa).

3 disordered regions span residues lysine 26–glutamate 84, valine 97–arginine 129, and serine 157–glutamine 470. Over residues glycine 30–glycine 40 the composition is skewed to low complexity. The span at aspartate 67–arginine 80 shows a compositional bias: polar residues. The span at serine 157–glutamate 181 shows a compositional bias: basic and acidic residues. Over residues isoleucine 198–aspartate 213 the composition is skewed to low complexity. Residues valine 237–glutamine 249 show a composition bias toward basic and acidic residues. Low complexity-rich tracts occupy residues proline 259–glutamate 290, glutamate 298–lysine 315, and serine 326–serine 335. Over residues lysine 347–alanine 356 the composition is skewed to basic residues. Composition is skewed to basic and acidic residues over residues lysine 357–glutamate 368, serine 389–lysine 403, lysine 410–arginine 419, and arginine 437–arginine 448. The span at arginine 449–arginine 461 shows a compositional bias: basic residues.

This is an uncharacterized protein from Caenorhabditis elegans.